Here is a 283-residue protein sequence, read N- to C-terminus: Elongation factor Ts (283 aa).

Positions 84 to 87 (TDFV) are involved in Mg(2+) ion dislocation from EF-Tu.

This sequence belongs to the EF-Ts family.

The protein resides in the cytoplasm. In terms of biological role, associates with the EF-Tu.GDP complex and induces the exchange of GDP to GTP. It remains bound to the aminoacyl-tRNA.EF-Tu.GTP complex up to the GTP hydrolysis stage on the ribosome. In Bifidobacterium longum (strain DJO10A), this protein is Elongation factor Ts.